A 473-amino-acid polypeptide reads, in one-letter code: Cysteine--tRNA ligase (473 aa).

A Zn(2+)-binding site is contributed by Cys30. The short motif at 32-42 (MTVYDYCHIGH) is the 'HIGH' region element. Zn(2+)-binding residues include Cys213, His238, and Glu242. Residues 270–274 (KMSKS) carry the 'KMSKS' region motif. Position 273 (Lys273) interacts with ATP.

This sequence belongs to the class-I aminoacyl-tRNA synthetase family. Monomer. Zn(2+) serves as cofactor.

The protein resides in the cytoplasm. It catalyses the reaction tRNA(Cys) + L-cysteine + ATP = L-cysteinyl-tRNA(Cys) + AMP + diphosphate. In Acinetobacter baumannii (strain SDF), this protein is Cysteine--tRNA ligase.